Here is a 1033-residue protein sequence, read N- to C-terminus: Immunoglobulin superfamily member 2 (1033 aa).

The signal sequence occupies residues 1–20 (MACILCVASLFLSLTKFSIG). At 21–970 (QREVKIQEGP…VSSLICSSGP (950 aa)) the chain is on the extracellular side. 7 consecutive Ig-like C2-type domains span residues 22–141 (REVK…TNLT), 144–266 (PDTL…TLIT), 279–388 (PAAR…TQMG), 408–529 (PAAR…QKIS), 539–657 (LRVN…ARVS), 670–797 (PESK…RKTS), and 806–941 (PTGS…KWIN). Cys-43 and Cys-121 form a disulfide bridge. An N-linked (GlcNAc...) asparagine glycan is attached at Asn-139. A disulfide bridge links Cys-168 with Cys-249. The EWI motif signature appears at 253–255 (EWI). 3 cysteine pairs are disulfide-bonded: Cys-304-Cys-377, Cys-432-Cys-509, and Cys-560-Cys-638. Residue Asn-677 is glycosylated (N-linked (GlcNAc...) asparagine). 2 disulfides stabilise this stretch: Cys-695–Cys-776 and Cys-832–Cys-925. Residues 971 to 991 (LLHFLIVCPFVMLLLLATSFL) traverse the membrane as a helical segment. The Cytoplasmic portion of the chain corresponds to 992 to 1033 (CLYRKARKLSQLSLSAKKEKALWVGMRKTSLQKEAGEESGHY).

N-glycosylated.

It is found in the membrane. Plays a role as inhibitor of T-cells proliferation induced by CD3. Inhibits expression of IL2RA on activated T-cells and secretion of IL2. Inhibits tyrosine kinases that are required for IL2 production and cellular proliferation. Inhibits phospholipase C-gamma-1/PLCG1 phosphorylation and subsequent CD3-induced changes in intracellular free calcium. Prevents nuclear translocation of nuclear factor of activated T-cell to the nucleus. Plays a role in the inhibition of T-cell proliferation via IL10 secretion by cutaneous dendritic cells. The sequence is that of Immunoglobulin superfamily member 2 (Cd101) from Mus musculus (Mouse).